Consider the following 492-residue polypeptide: Steroid 21-hydroxylase (492 aa).

Positions 91 and 120 each coordinate heme b. A 17alpha-hydroxyprogesterone-binding site is contributed by Arg-231. Arg-231 provides a ligand contact to progesterone. Heme b is bound by residues His-363, Arg-424, and Cys-426.

It belongs to the cytochrome P450 family. Heme b is required as a cofactor.

The protein localises to the endoplasmic reticulum membrane. Its subcellular location is the microsome membrane. The catalysed reaction is 17alpha-hydroxyprogesterone + reduced [NADPH--hemoprotein reductase] + O2 = 11-deoxycortisol + oxidized [NADPH--hemoprotein reductase] + H2O + H(+). It carries out the reaction progesterone + reduced [NADPH--hemoprotein reductase] + O2 = 21-hydroxyprogesterone + oxidized [NADPH--hemoprotein reductase] + H2O + H(+). Functionally, specifically catalyzes the 21-hydroxylation of steroids. Required for the adrenal synthesis of mineralocorticoids and glucocorticoids. In Felis catus (Cat), this protein is Steroid 21-hydroxylase (CYP21).